The chain runs to 458 residues: NADH-quinone oxidoreductase subunit N (458 aa).

14 helical membrane-spanning segments follow: residues 2–22 (LLIL…CFAL), 30–50 (IIYN…FKYS), 62–82 (GINI…SLII), 93–113 (AIKF…FVAI), 118–138 (FLLL…LAGF), 153–173 (FILG…IYGF), 196–216 (LIIG…SSPL), 235–255 (FTSA…KLII), 261–281 (INYN…AFGA), 290–310 (LMAY…ILPN), 319–339 (LYIL…IMLF), 361–381 (IAAL…LTGF), 397–417 (FTLA…YLKV), and 438–458 (LLLI…IILF).

Belongs to the complex I subunit 2 family. In terms of assembly, NDH-1 is composed of 14 different subunits. Subunits NuoA, H, J, K, L, M, N constitute the membrane sector of the complex.

It localises to the cell inner membrane. The catalysed reaction is a quinone + NADH + 5 H(+)(in) = a quinol + NAD(+) + 4 H(+)(out). Its function is as follows. NDH-1 shuttles electrons from NADH, via FMN and iron-sulfur (Fe-S) centers, to quinones in the respiratory chain. The immediate electron acceptor for the enzyme in this species is believed to be ubiquinone. Couples the redox reaction to proton translocation (for every two electrons transferred, four hydrogen ions are translocated across the cytoplasmic membrane), and thus conserves the redox energy in a proton gradient. The chain is NADH-quinone oxidoreductase subunit N from Rickettsia typhi (strain ATCC VR-144 / Wilmington).